The primary structure comprises 216 residues: Refilin-B (216 aa).

Residues 1-55 form a disordered region; that stretch reads MVGRLSLQDVPELVDTKKKGDGVLDSPDSGLPPSPSPSHWGLAATAGGGGERAPV. Phosphoserine occurs at positions 6 and 26.

It belongs to the Refilin family. In terms of assembly, interacts with FLNA and FLNB. Detected in various tissues, with highest expression in lung, followed by spleen.

The protein localises to the cytoplasm. It localises to the cytoskeleton. Involved in the regulation of the perinuclear actin network and nuclear shape through interaction with filamins. Plays an essential role in the formation of cartilaginous skeletal elements. The protein is Refilin-B of Mus musculus (Mouse).